The sequence spans 78 residues: Small ribosomal subunit protein bS18A (78 aa).

It belongs to the bacterial ribosomal protein bS18 family. In terms of assembly, part of the 30S ribosomal subunit. Forms a tight heterodimer with protein bS6.

In terms of biological role, binds as a heterodimer with protein bS6 to the central domain of the 16S rRNA, where it helps stabilize the platform of the 30S subunit. The polypeptide is Small ribosomal subunit protein bS18A (Streptomyces avermitilis (strain ATCC 31267 / DSM 46492 / JCM 5070 / NBRC 14893 / NCIMB 12804 / NRRL 8165 / MA-4680)).